Consider the following 674-residue polypeptide: Collagen alpha-1(X) chain (674 aa).

The signal sequence occupies residues 1-18 (MLPQTALLLLMSLNLVHG). Residues 19–56 (VFYTERYQTPTGIKGPPSNTKTQFFIPYAIKGKGVSLR) are nonhelical region (NC2). Positions 54-521 (SLRGEQGIPG…PPGPPGQVAL (468 aa)) are disordered. A triple-helical region region spans residues 57 to 519 (GEQGIPGPPG…PGPPGPPGQV (463 aa)). Positions 106 to 116 (GKPGLPGLPGK) are enriched in low complexity. Pro residues predominate over residues 137–147 (PRGPPGPPGIP). Cys-194 and Cys-197 are disulfide-bonded. A compositionally biased stretch (pro residues) spans 207 to 217 (PQGPTGPPGPP). 4 stretches are compositionally biased toward low complexity: residues 277-293 (IPGMKGQPGAPGTAGLP), 303-312 (LPGLKGQRGP), 393-403 (EPGLNGPKGNP), and 441-453 (PRGVPGIPGTRGP). A 4-hydroxyproline mark is found at Pro-460 and Pro-463. Over residues 506–516 (LPGPPGPPGPP) the composition is skewed to pro residues. The nonhelical region (NC1) stretch occupies residues 520–674 (ALPEDFVKAG…SFSGFLVAPM (155 aa)). The C1q domain maps to 541–674 (TGMPVSAFTV…SFSGFLVAPM (134 aa)). Asp-620, Glu-621, Leu-627, and Asp-628 together coordinate Ca(2+).

As to quaternary structure, homotrimer. In terms of processing, hydroxylation on proline residues within the sequence motif, GXPG, is most likely to be 4-hydroxy as this fits the requirement for 4-hydroxylation in vertebrates.

Its subcellular location is the secreted. It is found in the extracellular space. The protein resides in the extracellular matrix. Type X collagen is a product of hypertrophic chondrocytes and has been localized to presumptive mineralization zones of hyaline cartilage. The chain is Collagen alpha-1(X) chain (COL10A1) from Bos taurus (Bovine).